We begin with the raw amino-acid sequence, 347 residues long: MKPPIFFLIMSTVISGTLIVMTSSHWMLTWIGFEMNMLAIIPILMKKFNPRSMEASTKYFLTQATASMLLMMGIIINLLYSGQWTVPNNPNPMASILMTTALAMKLGLAPFHFWVPEVTQGIPLSSGMILLTWQKIAPLSVLYQISPTINPNLLLPMATLSVLIGGWGGLNQTQLRKILAYSSIAHMGWMTAILLYNPTMMILNLTIYIIMTLTTFMLFMLNSTTTTLSLSQTWNKMPLITSLITMLMLSLGGLPPLSGFMPKWMIIQELTKNEMIIMPTFLAITALLNLYFYMRLTYATALTMFPSTNNMKMKWQFESTKKMTFLPPLIITSTMLLPLTPMISILD.

The next 11 membrane-spanning stretches (helical) occupy residues 3–23 (PPIF…VMTS), 25–45 (HWML…PILM), 59–79 (YFLT…INLL), 96–116 (ILMT…FWVP), 122–142 (IPLS…LSVL), 149–169 (INPN…GWGG), 178–198 (ILAY…LYNP), 201–221 (MILN…LFML), 237–257 (MPLI…LPPL), 274–294 (EMII…YFYM), and 325–345 (FLPP…MISI).

This sequence belongs to the complex I subunit 2 family. In terms of assembly, core subunit of respiratory chain NADH dehydrogenase (Complex I) which is composed of 45 different subunits. Interacts with TMEM242.

The protein localises to the mitochondrion inner membrane. The enzyme catalyses a ubiquinone + NADH + 5 H(+)(in) = a ubiquinol + NAD(+) + 4 H(+)(out). Its function is as follows. Core subunit of the mitochondrial membrane respiratory chain NADH dehydrogenase (Complex I) which catalyzes electron transfer from NADH through the respiratory chain, using ubiquinone as an electron acceptor. Essential for the catalytic activity and assembly of complex I. This chain is NADH-ubiquinone oxidoreductase chain 2, found in Genetta servalina (Servaline genet).